A 290-amino-acid polypeptide reads, in one-letter code: Ribosomal RNA small subunit methyltransferase A (290 aa).

The S-adenosyl-L-methionine site is built by Asn27, Leu29, Gly54, Glu75, Asp100, and Asn125.

It belongs to the class I-like SAM-binding methyltransferase superfamily. rRNA adenine N(6)-methyltransferase family. RsmA subfamily.

The protein resides in the cytoplasm. It catalyses the reaction adenosine(1518)/adenosine(1519) in 16S rRNA + 4 S-adenosyl-L-methionine = N(6)-dimethyladenosine(1518)/N(6)-dimethyladenosine(1519) in 16S rRNA + 4 S-adenosyl-L-homocysteine + 4 H(+). Its function is as follows. Specifically dimethylates two adjacent adenosines (A1518 and A1519) in the loop of a conserved hairpin near the 3'-end of 16S rRNA in the 30S particle. May play a critical role in biogenesis of 30S subunits. The chain is Ribosomal RNA small subunit methyltransferase A from Streptococcus equi subsp. zooepidemicus (strain H70).